The primary structure comprises 613 residues: Glutathione S-transferase C-terminal domain-containing protein (613 aa).

The 197-residue stretch at 116–312 (LGFKKTCLKA…QQVPGVRFAA (197 aa)) folds into the GST C-terminal domain.

Belongs to the GSTCD family.

It is found in the cytoplasm. The sequence is that of Glutathione S-transferase C-terminal domain-containing protein (gstcd) from Xenopus laevis (African clawed frog).